The chain runs to 314 residues: Acetyl-coenzyme A carboxylase carboxyl transferase subunit beta (314 aa).

Residues 37–307 (LWQKCPACDA…MSLPALEPTY (271 aa)) enclose the CoA carboxyltransferase N-terminal domain. Zn(2+) is bound by residues cysteine 41, cysteine 44, cysteine 60, and cysteine 63. Residues 41–63 (CPACDALTYTKDLQQNWQVCPSC) form a C4-type zinc finger.

Belongs to the AccD/PCCB family. In terms of assembly, acetyl-CoA carboxylase is a heterohexamer composed of biotin carboxyl carrier protein (AccB), biotin carboxylase (AccC) and two subunits each of ACCase subunit alpha (AccA) and ACCase subunit beta (AccD). It depends on Zn(2+) as a cofactor.

It is found in the cytoplasm. The enzyme catalyses N(6)-carboxybiotinyl-L-lysyl-[protein] + acetyl-CoA = N(6)-biotinyl-L-lysyl-[protein] + malonyl-CoA. It participates in lipid metabolism; malonyl-CoA biosynthesis; malonyl-CoA from acetyl-CoA: step 1/1. Functionally, component of the acetyl coenzyme A carboxylase (ACC) complex. Biotin carboxylase (BC) catalyzes the carboxylation of biotin on its carrier protein (BCCP) and then the CO(2) group is transferred by the transcarboxylase to acetyl-CoA to form malonyl-CoA. The polypeptide is Acetyl-coenzyme A carboxylase carboxyl transferase subunit beta (Synechococcus sp. (strain JA-3-3Ab) (Cyanobacteria bacterium Yellowstone A-Prime)).